A 500-amino-acid polypeptide reads, in one-letter code: Lariat debranching enzyme (500 aa).

The segment at 1 to 25 (MSSKNPVDEQPCCGSHEGSHQDPAP) is disordered. 4 residues coordinate a divalent metal cation: Cys48, His50, Asp79, and Asn124. A lariat recognition loop region spans residues 164-194 (SGIFSQGDFQFSHYERPSFSERDVKSAYHVR). Positions 222, 274, and 276 each coordinate a divalent metal cation. The disordered stretch occupies residues 453–500 (DDANAKPNQDDVDFGDEDFVIDRGHTSDEPEAKKSRLDEDKFEAVPSE). The span at 462 to 471 (DDVDFGDEDF) shows a compositional bias: acidic residues. Residues 472 to 500 (VIDRGHTSDEPEAKKSRLDEDKFEAVPSE) are compositionally biased toward basic and acidic residues.

The protein belongs to the lariat debranching enzyme family. Fe(2+) serves as cofactor. It depends on Zn(2+) as a cofactor. Requires Mn(2+) as cofactor.

It is found in the nucleus. Active in presence of diverse metals including Fe(2+), Zn(2+), Mn(2+). Binds two metal cations in two adjacent alpha and beta metal-binding pockets. Functionally, cleaves the 2'-5' phosphodiester linkage at the branch point of lariat intron pre-mRNAs after splicing and converts them into linear molecules that are subsequently degraded. It thereby facilitates ribonucleotide turnover. The polypeptide is Lariat debranching enzyme (Caenorhabditis elegans).